The sequence spans 291 residues: Homoserine kinase (291 aa).

Residue 80 to 90 (PLARGLGSSST) coordinates ATP.

This sequence belongs to the GHMP kinase family. Homoserine kinase subfamily.

It is found in the cytoplasm. It carries out the reaction L-homoserine + ATP = O-phospho-L-homoserine + ADP + H(+). Its pathway is amino-acid biosynthesis; L-threonine biosynthesis; L-threonine from L-aspartate: step 4/5. Its function is as follows. Catalyzes the ATP-dependent phosphorylation of L-homoserine to L-homoserine phosphate. The chain is Homoserine kinase from Lactiplantibacillus plantarum (strain ATCC BAA-793 / NCIMB 8826 / WCFS1) (Lactobacillus plantarum).